A 269-amino-acid polypeptide reads, in one-letter code: Energy-coupling factor transporter ATP-binding protein EcfA1 (269 aa).

In terms of domain architecture, ABC transporter spans 8 to 242; sequence IVFKNVSFQY…AEELTRIGLD (235 aa). 42–49 contributes to the ATP binding site; sequence GHNGSGKS.

This sequence belongs to the ABC transporter superfamily. Energy-coupling factor EcfA family. Forms a stable energy-coupling factor (ECF) transporter complex composed of 2 membrane-embedded substrate-binding proteins (S component), 2 ATP-binding proteins (A component) and 2 transmembrane proteins (T component).

The protein localises to the cell membrane. In terms of biological role, ATP-binding (A) component of a common energy-coupling factor (ECF) ABC-transporter complex. Unlike classic ABC transporters this ECF transporter provides the energy necessary to transport a number of different substrates. The chain is Energy-coupling factor transporter ATP-binding protein EcfA1 from Staphylococcus aureus (strain Mu50 / ATCC 700699).